A 130-amino-acid polypeptide reads, in one-letter code: MAPSAKRSGPRKQKRNVPSGVAHIQSTFNNTIVSITDPNGEVIAWASAGSSGFKGAKKGTPFAAQTAADNAARRAIDQGMRQIEVMVSGPGSGRETAIRALQAAGLEITLIRDVTPIPHNGCRPPKRRRV.

This sequence belongs to the universal ribosomal protein uS11 family. In terms of assembly, part of the 30S ribosomal subunit. Interacts with proteins S7 and S18. Binds to IF-3.

In terms of biological role, located on the platform of the 30S subunit, it bridges several disparate RNA helices of the 16S rRNA. Forms part of the Shine-Dalgarno cleft in the 70S ribosome. This Thermosynechococcus vestitus (strain NIES-2133 / IAM M-273 / BP-1) protein is Small ribosomal subunit protein uS11.